Here is a 205-residue protein sequence, read N- to C-terminus: Holliday junction branch migration complex subunit RuvA (205 aa).

The segment at 1–64 (MIGRLRGIIL…EDAQLLFGFN (64 aa)) is domain I. Positions 65–143 (DKQERALFRE…GLSGDLFNSV (79 aa)) are domain II. The interval 144–156 (SDIPLTSPANVDN) is flexible linker. A domain III region spans residues 157–205 (RVGEPEAEAAAALVALGYKPQEASRMISKIARPDADCETLIRDALRAAL).

Belongs to the RuvA family. Homotetramer. Forms an RuvA(8)-RuvB(12)-Holliday junction (HJ) complex. HJ DNA is sandwiched between 2 RuvA tetramers; dsDNA enters through RuvA and exits via RuvB. An RuvB hexamer assembles on each DNA strand where it exits the tetramer. Each RuvB hexamer is contacted by two RuvA subunits (via domain III) on 2 adjacent RuvB subunits; this complex drives branch migration. In the full resolvosome a probable DNA-RuvA(4)-RuvB(12)-RuvC(2) complex forms which resolves the HJ.

The protein localises to the cytoplasm. The RuvA-RuvB-RuvC complex processes Holliday junction (HJ) DNA during genetic recombination and DNA repair, while the RuvA-RuvB complex plays an important role in the rescue of blocked DNA replication forks via replication fork reversal (RFR). RuvA specifically binds to HJ cruciform DNA, conferring on it an open structure. The RuvB hexamer acts as an ATP-dependent pump, pulling dsDNA into and through the RuvAB complex. HJ branch migration allows RuvC to scan DNA until it finds its consensus sequence, where it cleaves and resolves the cruciform DNA. The sequence is that of Holliday junction branch migration complex subunit RuvA from Pectobacterium atrosepticum (strain SCRI 1043 / ATCC BAA-672) (Erwinia carotovora subsp. atroseptica).